Here is a 79-residue protein sequence, read N- to C-terminus: Ketoisovalerate oxidoreductase subunit VorC (79 aa).

2 4Fe-4S ferredoxin-type domains span residues 4-33 (AYPV…MSNK) and 40-70 (HYVE…VHIE). Residues cysteine 13, cysteine 16, cysteine 19, cysteine 23, cysteine 49, cysteine 52, cysteine 55, and cysteine 59 each coordinate [4Fe-4S] cluster.

As to quaternary structure, heterotrimer of the VorA, VorB and VorC subunits. [4Fe-4S] cluster is required as a cofactor.

The enzyme catalyses 3-methyl-2-oxobutanoate + 2 oxidized [2Fe-2S]-[ferredoxin] + CoA = 2-methylpropanoyl-CoA + 2 reduced [2Fe-2S]-[ferredoxin] + CO2 + H(+). This chain is Ketoisovalerate oxidoreductase subunit VorC (vorC), found in Methanothermobacter marburgensis (strain ATCC BAA-927 / DSM 2133 / JCM 14651 / NBRC 100331 / OCM 82 / Marburg) (Methanobacterium thermoautotrophicum).